The following is a 35-amino-acid chain: MSDIN-like toxin proprotein 1 (35 aa).

The propeptide occupies 1–10 (MSDINATRLP). Residues 11–20 (IIIVLGLIIP) constitute a cross-link (cyclopeptide (Ile-Pro)). A propeptide spanning residues 21–35 (LCVSDIEMILTRGER) is cleaved from the precursor.

Belongs to the MSDIN fungal toxin family. In terms of processing, processed by the macrocyclase-peptidase enzyme POPB to yield a toxic cyclic decapeptide. POPB first removes 10 residues from the N-terminus. Conformational trapping of the remaining peptide forces the enzyme to release this intermediate rather than proceed to macrocyclization. The enzyme rebinds the remaining peptide in a different conformation and catalyzes macrocyclization of the N-terminal 10 residues.

In terms of biological role, probable toxin that belongs to the MSDIN-like toxin family responsible for a large number of food poisoning cases and deaths. This chain is MSDIN-like toxin proprotein 1, found in Amanita rimosa.